Here is a 551-residue protein sequence, read N- to C-terminus: Urocanate hydratase (551 aa).

Residues 48 to 49 (GG), Gln126, 172 to 174 (GMG), Glu192, Arg197, 238 to 239 (NA), 259 to 263 (QTSAH), 269 to 270 (YI), and Tyr318 each bind NAD(+). Cys406 is an active-site residue. Gly488 contacts NAD(+).

This sequence belongs to the urocanase family. NAD(+) serves as cofactor.

It is found in the cytoplasm. The catalysed reaction is 4-imidazolone-5-propanoate = trans-urocanate + H2O. Its pathway is amino-acid degradation; L-histidine degradation into L-glutamate; N-formimidoyl-L-glutamate from L-histidine: step 2/3. Catalyzes the conversion of urocanate to 4-imidazolone-5-propionate. This Geobacillus kaustophilus (strain HTA426) protein is Urocanate hydratase.